Consider the following 250-residue polypeptide: MGQKSNPNGLRLGIIRTWESKWYDVDKKVPFLVGEDFKIRPLIKNHYPKSTISQIEIKRLKKSNDEFIEIDLYTSKIGIIQGPENKNKNSLINKIEKLINKKVQINIFEVKAINKIAVLVAQNIAMQLQQRAFYKAVLKSAIQKALKSGVKGIKIIITGRLGGAEKARRDSISMGVVPLNTLRADIDYAFEEAHTTYGVLGVKVIINHGEVLPNKTIADTRQIFSSQYENKKNNNKRHFADKKNFKKSTS.

Residues 39-111 (IRPLIKNHYP…KVQINIFEVK (73 aa)) form the KH type-2 domain.

Belongs to the universal ribosomal protein uS3 family. In terms of assembly, part of the 30S ribosomal subunit. Forms a tight complex with proteins S10 and S14.

Functionally, binds the lower part of the 30S subunit head. Binds mRNA in the 70S ribosome, positioning it for translation. In Ziziphus jujuba witches'-broom phytoplasma, this protein is Small ribosomal subunit protein uS3.